We begin with the raw amino-acid sequence, 214 residues long: Outer-membrane lipoprotein carrier protein (214 aa).

Positions 1–24 (MKIKLAFAVLLALCLSLSVMPVLA) are cleaved as a signal peptide.

Belongs to the LolA family. In terms of assembly, monomer.

The protein resides in the periplasm. Functionally, participates in the translocation of lipoproteins from the inner membrane to the outer membrane. Only forms a complex with a lipoprotein if the residue after the N-terminal Cys is not an aspartate (The Asp acts as a targeting signal to indicate that the lipoprotein should stay in the inner membrane). This Alkalilimnicola ehrlichii (strain ATCC BAA-1101 / DSM 17681 / MLHE-1) protein is Outer-membrane lipoprotein carrier protein.